The sequence spans 269 residues: tRNA-cytidine(32) 2-sulfurtransferase (269 aa).

The short motif at S53–S58 is the PP-loop motif element. C128, C131, and C218 together coordinate [4Fe-4S] cluster.

This sequence belongs to the TtcA family. Homodimer. It depends on Mg(2+) as a cofactor. [4Fe-4S] cluster is required as a cofactor.

It localises to the cytoplasm. The catalysed reaction is cytidine(32) in tRNA + S-sulfanyl-L-cysteinyl-[cysteine desulfurase] + AH2 + ATP = 2-thiocytidine(32) in tRNA + L-cysteinyl-[cysteine desulfurase] + A + AMP + diphosphate + H(+). It participates in tRNA modification. Its function is as follows. Catalyzes the ATP-dependent 2-thiolation of cytidine in position 32 of tRNA, to form 2-thiocytidine (s(2)C32). The sulfur atoms are provided by the cysteine/cysteine desulfurase (IscS) system. The polypeptide is tRNA-cytidine(32) 2-sulfurtransferase (Pelobacter propionicus (strain DSM 2379 / NBRC 103807 / OttBd1)).